The following is a 375-amino-acid chain: Growth/differentiation factor 8 (375 aa).

The first 23 residues, 1-23, serve as a signal peptide directing secretion; the sequence is MQKLAVYVYIYLFMLISVDPVAL. A propeptide spanning residues 24–266 is cleaved from the precursor; that stretch reads DDGSQPTENA…VTDTPKRSRR (243 aa). A glycan (N-linked (GlcNAc...) asparagine) is linked at Asn-71. Intrachain disulfides connect Cys-272-Cys-282, Cys-281-Cys-340, Cys-309-Cys-372, and Cys-313-Cys-374.

It belongs to the TGF-beta family. As to quaternary structure, homodimer; disulfide-linked.

The protein resides in the secreted. Functionally, acts specifically as a negative regulator of skeletal muscle growth. The chain is Growth/differentiation factor 8 (MSTN) from Anser anser anser (Western greylag goose).